A 479-amino-acid chain; its full sequence is Ribosomal RNA small subunit methyltransferase F (479 aa).

S-adenosyl-L-methionine-binding positions include 125 to 131 (AAAPGSK), E149, D176, and D194. The active-site Nucleophile is the C247.

Belongs to the class I-like SAM-binding methyltransferase superfamily. RsmB/NOP family.

It is found in the cytoplasm. It carries out the reaction cytidine(1407) in 16S rRNA + S-adenosyl-L-methionine = 5-methylcytidine(1407) in 16S rRNA + S-adenosyl-L-homocysteine + H(+). Functionally, specifically methylates the cytosine at position 1407 (m5C1407) of 16S rRNA. The protein is Ribosomal RNA small subunit methyltransferase F of Escherichia fergusonii (strain ATCC 35469 / DSM 13698 / CCUG 18766 / IAM 14443 / JCM 21226 / LMG 7866 / NBRC 102419 / NCTC 12128 / CDC 0568-73).